Consider the following 238-residue polypeptide: GATA transcription factor 7 (238 aa).

Residues 24–64 (TSLESSSSQRKEDEQEREKFKSFSDQSTRLSPPEDLLSFPG) are disordered. Positions 32 to 45 (QRKEDEQEREKFKS) are enriched in basic and acidic residues. The short motif at 112-119 (KPRSKRRR) is the Nuclear localization signal element. The segment at 160 to 214 (QQLRRCCSHCGVQKTPQWRMGPLGAKTLCNACGVRFKSGRLLPEYRPACSPTFTN) adopts a GATA-type zinc-finger fold.

It belongs to the type IV zinc-finger family. Class A subfamily.

The protein resides in the nucleus. In terms of biological role, transcriptional activator that specifically binds 5'-GATA-3' or 5'-GAT-3' motifs within gene promoters. May be involved in the regulation of some light-responsive genes. This chain is GATA transcription factor 7 (GATA7), found in Arabidopsis thaliana (Mouse-ear cress).